The sequence spans 60 residues: Prokaryotic ubiquitin-like protein UBact (60 aa).

The interval 1–60 (MPERKTQPTTDQPWTKPNDGGDESGPRSPEVERPNTRDLLERMKRVDPRQARRYRQRSGE) is disordered. Residues 29–50 (PEVERPNTRDLLERMKRVDPRQ) show a composition bias toward basic and acidic residues. Basic residues predominate over residues 51–60 (ARRYRQRSGE). Glutamate 60 is covalently cross-linked (Isoglutamyl lysine isopeptide (Glu-Lys) (interchain with K-? in acceptor proteins)).

It belongs to the ubiquitin-like protein UBact family.

In terms of biological role, may function as a protein modifier covalently attached to lysine residues of substrate proteins. This may serve to target the modified proteins for degradation by proteasomes. The protein is Prokaryotic ubiquitin-like protein UBact of Fraserbacteria sp. (strain RBG_16_55_9).